A 54-amino-acid polypeptide reads, in one-letter code: Photosystem II reaction center protein L (54 aa).

A helical membrane pass occupies residues 33 to 53 (SLFWGLLLIFVLAVLFSSYIF).

The protein belongs to the PsbL family. As to quaternary structure, PSII is composed of 1 copy each of membrane proteins PsbA, PsbB, PsbC, PsbD, PsbE, PsbF, PsbH, PsbI, PsbJ, PsbK, PsbL, PsbM, PsbT, PsbX, PsbY, PsbZ, Psb30/Ycf12, at least 3 peripheral proteins of the oxygen-evolving complex and a large number of cofactors. It forms dimeric complexes.

Its subcellular location is the plastid. The protein localises to the chloroplast thylakoid membrane. In terms of biological role, one of the components of the core complex of photosystem II (PSII). PSII is a light-driven water:plastoquinone oxidoreductase that uses light energy to abstract electrons from H(2)O, generating O(2) and a proton gradient subsequently used for ATP formation. It consists of a core antenna complex that captures photons, and an electron transfer chain that converts photonic excitation into a charge separation. This subunit is found at the monomer-monomer interface and is required for correct PSII assembly and/or dimerization. This Stigeoclonium helveticum (Green alga) protein is Photosystem II reaction center protein L.